The primary structure comprises 375 residues: Succinyl-diaminopimelate desuccinylase (375 aa).

His66 contacts Zn(2+). Residue Asp68 is part of the active site. Position 99 (Asp99) interacts with Zn(2+). Glu133 (proton acceptor) is an active-site residue. Zn(2+) contacts are provided by Glu134, Glu162, and His348.

The protein belongs to the peptidase M20A family. DapE subfamily. Homodimer. Zn(2+) serves as cofactor. Requires Co(2+) as cofactor.

It carries out the reaction N-succinyl-(2S,6S)-2,6-diaminopimelate + H2O = (2S,6S)-2,6-diaminopimelate + succinate. It functions in the pathway amino-acid biosynthesis; L-lysine biosynthesis via DAP pathway; LL-2,6-diaminopimelate from (S)-tetrahydrodipicolinate (succinylase route): step 3/3. Catalyzes the hydrolysis of N-succinyl-L,L-diaminopimelic acid (SDAP), forming succinate and LL-2,6-diaminopimelate (DAP), an intermediate involved in the bacterial biosynthesis of lysine and meso-diaminopimelic acid, an essential component of bacterial cell walls. The chain is Succinyl-diaminopimelate desuccinylase from Shigella sonnei (strain Ss046).